The following is a 96-amino-acid chain: Aspartyl/glutamyl-tRNA(Asn/Gln) amidotransferase subunit C (96 aa).

It belongs to the GatC family. Heterotrimer of A, B and C subunits.

It carries out the reaction L-glutamyl-tRNA(Gln) + L-glutamine + ATP + H2O = L-glutaminyl-tRNA(Gln) + L-glutamate + ADP + phosphate + H(+). The catalysed reaction is L-aspartyl-tRNA(Asn) + L-glutamine + ATP + H2O = L-asparaginyl-tRNA(Asn) + L-glutamate + ADP + phosphate + 2 H(+). Allows the formation of correctly charged Asn-tRNA(Asn) or Gln-tRNA(Gln) through the transamidation of misacylated Asp-tRNA(Asn) or Glu-tRNA(Gln) in organisms which lack either or both of asparaginyl-tRNA or glutaminyl-tRNA synthetases. The reaction takes place in the presence of glutamine and ATP through an activated phospho-Asp-tRNA(Asn) or phospho-Glu-tRNA(Gln). This chain is Aspartyl/glutamyl-tRNA(Asn/Gln) amidotransferase subunit C, found in Acaryochloris marina (strain MBIC 11017).